A 593-amino-acid polypeptide reads, in one-letter code: V-type ATP synthase alpha chain (593 aa).

Residue 246 to 253 participates in ATP binding; that stretch reads GPFGAGKT.

This sequence belongs to the ATPase alpha/beta chains family.

It carries out the reaction ATP + H2O + 4 H(+)(in) = ADP + phosphate + 5 H(+)(out). In terms of biological role, produces ATP from ADP in the presence of a proton gradient across the membrane. The V-type alpha chain is a catalytic subunit. In Protochlamydia amoebophila (strain UWE25), this protein is V-type ATP synthase alpha chain.